The following is a 208-amino-acid chain: Probable GTP-binding protein EngB (208 aa).

One can recognise an EngB-type G domain in the interval 23-205; sequence LTSEMVILGR…RQTLLKYLLT (183 aa). GTP-binding positions include 31-38, 57-61, 84-87, 154-157, and 182-184; these read GRSNVGKS, GKTRL, DLPG, TKFD, and FNA. The Mg(2+) site is built by Ser38 and Thr59.

It belongs to the TRAFAC class TrmE-Era-EngA-EngB-Septin-like GTPase superfamily. EngB GTPase family. Mg(2+) serves as cofactor.

Functionally, necessary for normal cell division and for the maintenance of normal septation. The chain is Probable GTP-binding protein EngB from Helicobacter pylori (strain Shi470).